A 170-amino-acid chain; its full sequence is Thialysine N-epsilon-acetyltransferase (170 aa).

One can recognise an N-acetyltransferase domain in the interval 4-168; sequence VRIREAKEGD…FQGEATRKLA (165 aa). Position 27–28 (27–28) interacts with substrate; sequence FE. Residue K29 is modified to N6-acetyllysine. Residue E92 coordinates substrate. Residues 94 to 96, 102 to 107, 133 to 135, and Y140 each bind acetyl-CoA; these read IYV, GQGIGS, and NQR. Y140 (proton donor) is an active-site residue. Residue E152 coordinates substrate.

This sequence belongs to the acetyltransferase family. Homodimer. As to expression, widely expressed. Under physiological conditions, SSAT2 is expressed at lower level that SSAT1 (SSAT). Many tissues express only SSAT1, several tissues express both SSAT1 and SSAT2, and bone, cervix, ovary and pineal gland expressed only SSAT2.

It localises to the cytoplasm. The catalysed reaction is S-(2-aminoethyl)-L-cysteine + acetyl-CoA = S-(2-acetamidoethyl)-L-cysteine + CoA + H(+). It catalyses the reaction an alkane-alpha,omega-diamine + acetyl-CoA = an N-acetylalkane-alpha,omega-diamine + CoA + H(+). Catalyzes the N-acetylation of the amino acid thialysine (S-(2-aminoethyl)-L-cysteine), a L-lysine analog with the 4-methylene group substituted with a sulfur. May also catalyze acetylation of polyamines, such as norspermidine, spermidine or spermine. However, ability to acetylate polyamines is weak, suggesting that it does not act as a diamine acetyltransferase in vivo. The sequence is that of Thialysine N-epsilon-acetyltransferase from Homo sapiens (Human).